The sequence spans 542 residues: Chloride channel CLIC-like protein 1 (542 aa).

An N-terminal signal peptide occupies residues 1–18 (MLYSLLLCECLWLITAYA). At 19-184 (HDDEWIDPTD…EEFFGVDPYN (166 aa)) the chain is on the lumenal side. The chain crosses the membrane as a helical span at residues 185-205 (VFMVLLCLLCIVALVATELWT). Residues 206–216 (YVRWYTQLKRV) lie on the Cytoplasmic side of the membrane. The helical transmembrane segment at 217–237 (FFISFLISLGWNWMYLYKLAF) threads the bilayer. Residues 238-329 (AQHQAEVAKM…GEFIKALMKE (92 aa)) lie on the Lumenal side of the membrane. The helical transmembrane segment at 330-350 (IPVLLHIPVLIIMALAVLSFC) threads the bilayer. Over 351-542 (YGAGKSVNML…PASTAVEVCG (192 aa)) the chain is Cytoplasmic. Positions 369 to 394 (EAPQALQAGERRRQQKIDYRPHGGAG) are disordered. The span at 377–389 (GERRRQQKIDYRP) shows a compositional bias: basic and acidic residues. A phosphoserine mark is found at Ser438 and Ser464. A disordered region spans residues 452–542 (AREHPKVVPG…PASTAVEVCG (91 aa)). Residues 480–491 (ESTPTESSTESS) are compositionally biased toward low complexity. At Thr482 the chain carries Phosphothreonine. Ser532 is subject to Phosphoserine.

Belongs to the chloride channel MCLC family. Homomultimers. Interacts with mitochondrial protein PIGBOS1 (via C-terminus); the interaction occurs at the mitochondria-associated endoplasmic reticulum (ER) membrane, a zone of contact between the ER and mitochondrial membranes, but does not appear to play a role in ER-mitochondria tethering and is not affected by ER stress. Interacts with CALR.

The protein localises to the endoplasmic reticulum membrane. It catalyses the reaction chloride(in) = chloride(out). The catalysed reaction is bromide(in) = bromide(out). It carries out the reaction nitrate(in) = nitrate(out). The enzyme catalyses fluoride(in) = fluoride(out). Anion-selective channel with Ca(2+)-dependent and voltage-independent gating. Permeable to small monovalent anions with selectivity for bromide &gt; chloride &gt; nitrate &gt; fluoride. Operates in the endoplasmic reticulum (ER) membrane where it mediates chloride efflux to compensate for the loss of positive charges from the ER lumen upon Ca(2+) release. Contributes to the maintenance of ER Ca(2+) pools and activation of unfolded protein response to prevent accumulation of misfolded proteins in the ER lumen. Particularly involved in ER homeostasis mechanisms underlying motor neurons and retinal photoreceptors survival. The chain is Chloride channel CLIC-like protein 1 (CLCC1) from Bos taurus (Bovine).